Here is a 331-residue protein sequence, read N- to C-terminus: Phenylalanine--tRNA ligase alpha subunit (331 aa).

Glu254 serves as a coordination point for Mg(2+).

Belongs to the class-II aminoacyl-tRNA synthetase family. Phe-tRNA synthetase alpha subunit type 1 subfamily. In terms of assembly, tetramer of two alpha and two beta subunits. Mg(2+) is required as a cofactor.

It is found in the cytoplasm. It carries out the reaction tRNA(Phe) + L-phenylalanine + ATP = L-phenylalanyl-tRNA(Phe) + AMP + diphosphate + H(+). This is Phenylalanine--tRNA ligase alpha subunit from Blochmanniella pennsylvanica (strain BPEN).